A 1802-amino-acid polypeptide reads, in one-letter code: Bromodomain and WD repeat-containing protein 3 (1802 aa).

WD repeat units lie at residues isoleucine 170–threonine 209, arginine 213–leucine 251, alanine 255–tryptophan 297, arginine 307–leucine 347, glutamate 353–tyrosine 393, serine 400–serine 452, glutamine 456–leucine 495, and arginine 502–phenylalanine 542. Phosphoserine is present on residues serine 693 and serine 703. The interval lysine 768–glycine 910 is disordered. The span at serine 785–histidine 795 shows a compositional bias: basic residues. Over residues threonine 796 to glutamine 817 the composition is skewed to polar residues. The segment covering glutamate 818–threonine 829 has biased composition (acidic residues). Residues serine 846 to aspartate 859 are compositionally biased toward low complexity. Phosphoserine is present on residues serine 885 and serine 886. A compositionally biased stretch (basic and acidic residues) spans glutamate 889–glutamine 898. Over residues lysine 899–glycine 909 the composition is skewed to basic residues. A Bromo 1 domain is found at tryptophan 1138–glutamine 1245. 4 disordered regions span residues arginine 1262–arginine 1292, arginine 1326–aspartate 1361, isoleucine 1438–serine 1500, and serine 1520–arginine 1725. The segment covering aspartate 1266–serine 1278 has biased composition (acidic residues). The region spanning cysteine 1300–isoleucine 1430 is the Bromo 2 domain. A compositionally biased stretch (basic residues) spans glutamine 1441–arginine 1453. Over residues serine 1454–lysine 1468 the composition is skewed to low complexity. Over residues lysine 1479–valine 1499 the composition is skewed to polar residues. The segment covering serine 1520–serine 1533 has biased composition (low complexity). Serine 1577 and serine 1579 each carry phosphoserine. Basic and acidic residues predominate over residues glycine 1587–histidine 1600. The segment covering leucine 1601 to glutamate 1626 has biased composition (low complexity). Residues serine 1627–serine 1643 show a composition bias toward basic and acidic residues. 2 stretches are compositionally biased toward basic residues: residues arginine 1649–lysine 1666 and arginine 1684–arginine 1697. Position 1763 is a phosphoserine (serine 1763).

As to expression, found in most adult tissues. Down-regulated in a majority of the B-CLL cases examined.

Functionally, plays a role in the regulation of cell morphology and cytoskeletal organization. Required in the control of cell shape. The protein is Bromodomain and WD repeat-containing protein 3 (BRWD3) of Homo sapiens (Human).